The sequence spans 523 residues: Pentatricopeptide repeat-containing protein At1g52640, mitochondrial (523 aa).

The N-terminal 5 residues, 1 to 5, are a transit peptide targeting the mitochondrion; it reads MAIRT. PPR repeat units follow at residues 101-135, 137-171, 172-206, 207-241, 242-276, 277-311, 312-346, 347-381, 382-416, and 417-452; these read SLES…NYFE, SSKV…GIKP, CVDD…GIVP, SAKT…NCVV, DLLA…GLKP, DAYS…DLVP, NVYT…GANP, DTWT…KCLP, DRHT…KFYP, and TVAT…GIPP. Positions 498 to 523 are disordered; sequence KRRRLGRRSENSEDDDDDFELERDTI. A compositionally biased stretch (acidic residues) spans 509–523; sequence SEDDDDDFELERDTI.

The protein belongs to the PPR family. P subfamily.

It is found in the mitochondrion. This chain is Pentatricopeptide repeat-containing protein At1g52640, mitochondrial, found in Arabidopsis thaliana (Mouse-ear cress).